Here is a 450-residue protein sequence, read N- to C-terminus: UDP-N-acetylmuramoylalanine--D-glutamate ligase (450 aa).

Glycine 119–threonine 125 serves as a coordination point for ATP.

The protein belongs to the MurCDEF family.

Its subcellular location is the cytoplasm. The enzyme catalyses UDP-N-acetyl-alpha-D-muramoyl-L-alanine + D-glutamate + ATP = UDP-N-acetyl-alpha-D-muramoyl-L-alanyl-D-glutamate + ADP + phosphate + H(+). It participates in cell wall biogenesis; peptidoglycan biosynthesis. Its function is as follows. Cell wall formation. Catalyzes the addition of glutamate to the nucleotide precursor UDP-N-acetylmuramoyl-L-alanine (UMA). This Bacillus cereus (strain Q1) protein is UDP-N-acetylmuramoylalanine--D-glutamate ligase.